The primary structure comprises 56 residues: Large ribosomal subunit protein bL32 (56 aa).

Positions methionine 1–serine 28 are disordered. Over residues arginine 7–arginine 16 the composition is skewed to basic residues.

Belongs to the bacterial ribosomal protein bL32 family.

The polypeptide is Large ribosomal subunit protein bL32 (Vibrio vulnificus (strain CMCP6)).